Reading from the N-terminus, the 404-residue chain is 6-deoxyerythronolide B hydroxylase (404 aa).

Cys351 is a heme binding site.

It belongs to the cytochrome P450 family. Requires heme as cofactor.

Its subcellular location is the cytoplasm. It catalyses the reaction 6-deoxyerythronolide B + 2 reduced [2Fe-2S]-[ferredoxin] + O2 + 2 H(+) = erythronolide B + 2 oxidized [2Fe-2S]-[ferredoxin] + H2O. It participates in antibiotic biosynthesis; erythromycin biosynthesis. Its function is as follows. Catalyzes the conversion of 6-deoxyerythronolide B (6-DEB) to erythronolide B (EB) by the insertion of an oxygen at the 6S position of 6-DEB. Requires the participation of a ferredoxin and a ferredoxin reductase for the transfer of electrons from NADPH to the monooxygenase. This chain is 6-deoxyerythronolide B hydroxylase, found in Saccharopolyspora erythraea (strain ATCC 11635 / DSM 40517 / JCM 4748 / NBRC 13426 / NCIMB 8594 / NRRL 2338).